The chain runs to 209 residues: UPF0174 protein jhp_1493 (209 aa).

The protein belongs to the UPF0174 family.

This Helicobacter pylori (strain J99 / ATCC 700824) (Campylobacter pylori J99) protein is UPF0174 protein jhp_1493.